The primary structure comprises 132 residues: Small ribosomal subunit protein uS8 (132 aa).

This sequence belongs to the universal ribosomal protein uS8 family. In terms of assembly, part of the 30S ribosomal subunit. Contacts proteins S5 and S12.

Functionally, one of the primary rRNA binding proteins, it binds directly to 16S rRNA central domain where it helps coordinate assembly of the platform of the 30S subunit. The chain is Small ribosomal subunit protein uS8 from Mycolicibacterium vanbaalenii (strain DSM 7251 / JCM 13017 / BCRC 16820 / KCTC 9966 / NRRL B-24157 / PYR-1) (Mycobacterium vanbaalenii).